Reading from the N-terminus, the 942-residue chain is Nuclear receptor coactivator 7 (942 aa).

Methionine 1 is subject to N-acetylmethionine. Over residues 1-12 (MDTKEEKKERKQ) the composition is skewed to basic and acidic residues. The tract at residues 1-46 (MDTKEEKKERKQSYFARLKKKKQAKQNAETASAVATRTHTGKEDNN) is disordered. Residues 4–29 (KEEKKERKQSYFARLKKKKQAKQNAE) adopt a coiled-coil conformation. Residues 25 to 38 (KQNAETASAVATRT) are compositionally biased toward polar residues. Serine 89 carries the phosphoserine modification. Positions 114–157 (MEYTAGNQDTLNSIALKFNITPNKLVELNKLFTHTIVPGQVLFV) constitute a LysM domain. Threonine 134 bears the Phosphothreonine mark. The disordered stretch occupies residues 161 to 188 (NSPSSTLRLSSSSPGATVSPSSSDAEYD). Residues 162 to 183 (SPSSTLRLSSSSPGATVSPSSS) are compositionally biased toward low complexity. Phosphoserine is present on residues serine 179, serine 183, serine 208, serine 209, and serine 211. Positions 324–416 (KFKSINKEKR…ENFLGEDDDF (93 aa)) are disordered. The segment covering 356-368 (GHTPTKPSGSSVS) has biased composition (polar residues). A compositionally biased stretch (basic and acidic residues) spans 369–381 (EKLKKLDSSRETS). Phosphoserine occurs at positions 441, 500, and 502. Residues 781–942 (ALLENMHIEQ…VQDLEVWAFD (162 aa)) enclose the TLDc domain.

Belongs to the OXR1 family. As to quaternary structure, interacts with ESR1, ESR2A, ESR2B, THRB, PPARG and RARA in a ligand-inducible manner. Interacts with the heterodimer AHR-ARNT. In terms of tissue distribution, highly expressed in brain. Weakly expressed in mammary gland, ovary, uterus, prostate, stomach, bladder, spinal cord and pancreas. Expressed in cancer cell line.

The protein localises to the nucleus. In terms of biological role, enhances the transcriptional activities of several nuclear receptors. Involved in the coactivation of different nuclear receptors, such as ESR1, THRB, PPARG and RARA. The chain is Nuclear receptor coactivator 7 (NCOA7) from Homo sapiens (Human).